Here is a 441-residue protein sequence, read N- to C-terminus: Protein SPMIP7 (441 aa).

Testis specific. Expressed at the spermatid stage.

Functionally, essential for normal spermatogenesis. The polypeptide is Protein SPMIP7 (Spmip7) (Mus musculus (Mouse)).